The primary structure comprises 595 residues: Elongation factor 4 (595 aa).

Residues Lys-2–Lys-184 form the tr-type G domain. GTP-binding positions include Asp-14–Thr-19 and Asn-131–Asp-134.

This sequence belongs to the TRAFAC class translation factor GTPase superfamily. Classic translation factor GTPase family. LepA subfamily.

The protein localises to the cell inner membrane. The enzyme catalyses GTP + H2O = GDP + phosphate + H(+). Its function is as follows. Required for accurate and efficient protein synthesis under certain stress conditions. May act as a fidelity factor of the translation reaction, by catalyzing a one-codon backward translocation of tRNAs on improperly translocated ribosomes. Back-translocation proceeds from a post-translocation (POST) complex to a pre-translocation (PRE) complex, thus giving elongation factor G a second chance to translocate the tRNAs correctly. Binds to ribosomes in a GTP-dependent manner. The polypeptide is Elongation factor 4 (Ruthia magnifica subsp. Calyptogena magnifica).